Consider the following 158-residue polypeptide: Ribonuclease H (158 aa).

An RNase H type-1 domain is found at Met1–Met142. Mg(2+) is bound by residues Asp10, Glu48, Asp70, and Asp134.

This sequence belongs to the RNase H family. As to quaternary structure, monomer. It depends on Mg(2+) as a cofactor.

It is found in the cytoplasm. It catalyses the reaction Endonucleolytic cleavage to 5'-phosphomonoester.. Its function is as follows. Endonuclease that specifically degrades the RNA of RNA-DNA hybrids. This chain is Ribonuclease H, found in Cronobacter sakazakii (strain ATCC BAA-894) (Enterobacter sakazakii).